A 208-amino-acid chain; its full sequence is Uracil phosphoribosyltransferase (208 aa).

5-phospho-alpha-D-ribose 1-diphosphate is bound by residues R78, R103, and 130–138; that span reads DPMLATGGS. Residues I193 and 198 to 200 each bind uracil; that span reads GDA. Residue D199 participates in 5-phospho-alpha-D-ribose 1-diphosphate binding.

The protein belongs to the UPRTase family. Mg(2+) serves as cofactor.

It catalyses the reaction UMP + diphosphate = 5-phospho-alpha-D-ribose 1-diphosphate + uracil. Its pathway is pyrimidine metabolism; UMP biosynthesis via salvage pathway; UMP from uracil: step 1/1. With respect to regulation, allosterically activated by GTP. Catalyzes the conversion of uracil and 5-phospho-alpha-D-ribose 1-diphosphate (PRPP) to UMP and diphosphate. This chain is Uracil phosphoribosyltransferase, found in Thermus thermophilus (strain ATCC 27634 / DSM 579 / HB8).